The chain runs to 227 residues: Protein FdhD (227 aa).

A Mo-bis(molybdopterin guanine dinucleotide)-binding site is contributed by 210-215 (FARNGK).

Belongs to the FdhD family.

Its subcellular location is the cytoplasm. Required for formate dehydrogenase (FDH) activity. The polypeptide is Protein FdhD (Methanocaldococcus jannaschii (strain ATCC 43067 / DSM 2661 / JAL-1 / JCM 10045 / NBRC 100440) (Methanococcus jannaschii)).